The sequence spans 548 residues: Eukaryotic translation initiation factor 3 subunit D (548 aa).

Residue K53 is modified to N6-acetyllysine. A Phosphoserine modification is found at S161. Positions D285–P299 are RNA gate. Residues P523 to A548 are disordered. S528 and S529 each carry phosphoserine. Acidic residues predominate over residues S529–A548.

It belongs to the eIF-3 subunit D family. Component of the eukaryotic translation initiation factor 3 (eIF-3) complex, which is composed of 13 subunits: EIF3A, EIF3B, EIF3C, EIF3D, EIF3E, EIF3F, EIF3G, EIF3H, EIF3I, EIF3J, EIF3K, EIF3L and EIF3M. The eIF-3 complex appears to include 3 stable modules: module A is composed of EIF3A, EIF3B, EIF3G and EIF3I; module B is composed of EIF3F, EIF3H, and EIF3M; and module C is composed of EIF3C, EIF3D, EIF3E, EIF3K and EIF3L. EIF3C of module C binds EIF3B of module A and EIF3H of module B, thereby linking the three modules. EIF3J is a labile subunit that binds to the eIF-3 complex via EIF3B. The eIF-3 complex interacts with RPS6KB1 under conditions of nutrient depletion. Mitogenic stimulation leads to binding and activation of a complex composed of MTOR and RPTOR, leading to phosphorylation and release of RPS6KB1 and binding of EIF4B to eIF-3.

It is found in the cytoplasm. Functionally, mRNA cap-binding component of the eukaryotic translation initiation factor 3 (eIF-3) complex, a complex required for several steps in the initiation of protein synthesis of a specialized repertoire of mRNAs. The eIF-3 complex associates with the 40S ribosome and facilitates the recruitment of eIF-1, eIF-1A, eIF-2:GTP:methionyl-tRNAi and eIF-5 to form the 43S pre-initiation complex (43S PIC). The eIF-3 complex stimulates mRNA recruitment to the 43S PIC and scanning of the mRNA for AUG recognition. The eIF-3 complex is also required for disassembly and recycling of post-termination ribosomal complexes and subsequently prevents premature joining of the 40S and 60S ribosomal subunits prior to initiation. The eIF-3 complex specifically targets and initiates translation of a subset of mRNAs involved in cell proliferation, including cell cycling, differentiation and apoptosis, and uses different modes of RNA stem-loop binding to exert either translational activation or repression. In the eIF-3 complex, EIF3D specifically recognizes and binds the 7-methylguanosine cap of a subset of mRNAs. This is Eukaryotic translation initiation factor 3 subunit D from Bos taurus (Bovine).